The chain runs to 286 residues: Pantothenate synthetase (286 aa).

31–38 (MGALHDGH) contributes to the ATP binding site. The active-site Proton donor is His38. Gln62 contributes to the (R)-pantoate binding site. Gln62 is a binding site for beta-alanine. 148–151 (GKKD) lines the ATP pocket. A (R)-pantoate-binding site is contributed by Gln154. ATP contacts are provided by residues Val177 and 185–188 (KSSR).

This sequence belongs to the pantothenate synthetase family. As to quaternary structure, homodimer.

Its subcellular location is the cytoplasm. The enzyme catalyses (R)-pantoate + beta-alanine + ATP = (R)-pantothenate + AMP + diphosphate + H(+). The protein operates within cofactor biosynthesis; (R)-pantothenate biosynthesis; (R)-pantothenate from (R)-pantoate and beta-alanine: step 1/1. In terms of biological role, catalyzes the condensation of pantoate with beta-alanine in an ATP-dependent reaction via a pantoyl-adenylate intermediate. The polypeptide is Pantothenate synthetase (Staphylococcus carnosus (strain TM300)).